The primary structure comprises 356 residues: Altered inheritance of mitochondria protein 23, mitochondrial (356 aa).

A mitochondrion-targeting transit peptide spans 1 to 32 (MLKVPLSDVLSQKMLFLKSFRYFHCTKYFSRD).

Belongs to the AIM23 family.

The protein resides in the mitochondrion. The chain is Altered inheritance of mitochondria protein 23, mitochondrial (AIM23) from Saccharomyces cerevisiae (strain RM11-1a) (Baker's yeast).